The primary structure comprises 201 residues: Ribosome maturation factor RimM (201 aa).

The 75-residue stretch at 92-166 (DEDEFYHADL…RVVVEPPANF (75 aa)) folds into the PRC barrel domain. Residues 169-201 (PAGPQPAEGEEMPDGALEALEGEEAGAGTAPQP) are disordered.

Belongs to the RimM family. Binds ribosomal protein uS19.

It is found in the cytoplasm. An accessory protein needed during the final step in the assembly of 30S ribosomal subunit, possibly for assembly of the head region. Essential for efficient processing of 16S rRNA. May be needed both before and after RbfA during the maturation of 16S rRNA. It has affinity for free ribosomal 30S subunits but not for 70S ribosomes. This chain is Ribosome maturation factor RimM, found in Rhodospirillum centenum (strain ATCC 51521 / SW).